The primary structure comprises 483 residues: 2-methylcitrate dehydratase (483 aa).

This sequence belongs to the PrpD family. As to quaternary structure, monomer.

The catalysed reaction is (2S,3S)-2-methylcitrate = 2-methyl-cis-aconitate + H2O. It carries out the reaction citrate = D-threo-isocitrate. Its pathway is organic acid metabolism; propanoate degradation. The protein operates within carbohydrate metabolism; tricarboxylic acid cycle; isocitrate from oxaloacetate: step 2/2. In terms of biological role, involved in the catabolism of short chain fatty acids (SCFA) via the tricarboxylic acid (TCA)(acetyl degradation route) and via the 2-methylcitrate cycle I (propionate degradation route). Catalyzes the dehydration of 2-methylcitrate (2-MC) to yield the cis isomer of 2-methyl-aconitate. It is also able to catalyze the dehydration of citrate and the hydration of cis-aconitate at a lower rate. Due to its broad substrate specificity, it seems to be responsible for the residual aconitase activity of the acnAB-null mutant. The chain is 2-methylcitrate dehydratase from Escherichia coli (strain K12).